The sequence spans 415 residues: 4-hydroxy-3-methylbut-2-enyl diphosphate reductase (415 aa).

C66 is a binding site for [4Fe-4S] cluster. H96 serves as a coordination point for (2E)-4-hydroxy-3-methylbut-2-enyl diphosphate. Residue H96 coordinates dimethylallyl diphosphate. H96 contacts isopentenyl diphosphate. C158 serves as a coordination point for [4Fe-4S] cluster. H186 contacts (2E)-4-hydroxy-3-methylbut-2-enyl diphosphate. H186 contributes to the dimethylallyl diphosphate binding site. H186 contributes to the isopentenyl diphosphate binding site. Catalysis depends on E188, which acts as the Proton donor. Position 259 (T259) interacts with (2E)-4-hydroxy-3-methylbut-2-enyl diphosphate. C297 serves as a coordination point for [4Fe-4S] cluster. 4 residues coordinate (2E)-4-hydroxy-3-methylbut-2-enyl diphosphate: S326, S327, N328, and S388. Residues S326, S327, N328, and S388 each contribute to the dimethylallyl diphosphate site. Isopentenyl diphosphate-binding residues include S326, S327, N328, and S388.

It belongs to the IspH family. Requires [4Fe-4S] cluster as cofactor.

It carries out the reaction isopentenyl diphosphate + 2 oxidized [2Fe-2S]-[ferredoxin] + H2O = (2E)-4-hydroxy-3-methylbut-2-enyl diphosphate + 2 reduced [2Fe-2S]-[ferredoxin] + 2 H(+). The catalysed reaction is dimethylallyl diphosphate + 2 oxidized [2Fe-2S]-[ferredoxin] + H2O = (2E)-4-hydroxy-3-methylbut-2-enyl diphosphate + 2 reduced [2Fe-2S]-[ferredoxin] + 2 H(+). It participates in isoprenoid biosynthesis; dimethylallyl diphosphate biosynthesis; dimethylallyl diphosphate from (2E)-4-hydroxy-3-methylbutenyl diphosphate: step 1/1. Its pathway is isoprenoid biosynthesis; isopentenyl diphosphate biosynthesis via DXP pathway; isopentenyl diphosphate from 1-deoxy-D-xylulose 5-phosphate: step 6/6. Its function is as follows. Catalyzes the conversion of 1-hydroxy-2-methyl-2-(E)-butenyl 4-diphosphate (HMBPP) into a mixture of isopentenyl diphosphate (IPP) and dimethylallyl diphosphate (DMAPP). Acts in the terminal step of the DOXP/MEP pathway for isoprenoid precursor biosynthesis. This chain is 4-hydroxy-3-methylbut-2-enyl diphosphate reductase, found in Acaryochloris marina (strain MBIC 11017).